The following is a 425-amino-acid chain: Dihydroorotase (425 aa).

Zn(2+)-binding residues include H60 and H62. Substrate contacts are provided by residues H62–R64 and N94. Zn(2+) is bound by residues D152, H179, and H232. Substrate is bound at residue N278. Zn(2+) is bound at residue D305. D305 is a catalytic residue. H309 serves as a coordination point for substrate.

This sequence belongs to the metallo-dependent hydrolases superfamily. DHOase family. Class I DHOase subfamily. The cofactor is Zn(2+).

It catalyses the reaction (S)-dihydroorotate + H2O = N-carbamoyl-L-aspartate + H(+). It functions in the pathway pyrimidine metabolism; UMP biosynthesis via de novo pathway; (S)-dihydroorotate from bicarbonate: step 3/3. Functionally, catalyzes the reversible cyclization of carbamoyl aspartate to dihydroorotate. The polypeptide is Dihydroorotase (Syntrophotalea carbinolica (strain DSM 2380 / NBRC 103641 / GraBd1) (Pelobacter carbinolicus)).